A 144-amino-acid polypeptide reads, in one-letter code: Austinoid biosynthesis clusters protein S (144 aa).

Belongs to the trt14 isomerase family. As to quaternary structure, homodimer.

The protein operates within secondary metabolite biosynthesis; terpenoid biosynthesis. Its function is as follows. Part of the gene cluster B that mediates the biosynthesis of the fungal meroterpenoid acetoxydehydroaustin. The first step of the pathway is the synthesis of 3,5-dimethylorsellinic acid by the polyketide synthase ausA. 3,5-dimethylorsellinic acid is then prenylated by the polyprenyl transferase ausN. Further epoxidation by the FAD-dependent monooxygenase ausM and cyclization by the probable terpene cyclase ausL lead to the formation of protoaustinoid A. Protoaustinoid A is then oxidized to spiro-lactone preaustinoid A3 by the combined action of the FAD-binding monooxygenases ausB and ausC, and the dioxygenase ausE. Acid-catalyzed keto-rearrangement and ring contraction of the tetraketide portion of preaustinoid A3 by ausJ lead to the formation of preaustinoid A4. The aldo-keto reductase ausK, with the help of ausH, is involved in the next step by transforming preaustinoid A4 into isoaustinone which is in turn hydroxylated by the P450 monooxygenase ausI to form austinolide. The cytochrome P450 monooxygenase ausG then modifies austinolide to austinol. Austinol is further acetylated to austin by the O-acetyltransferase ausP, which spontaneously changes to dehydroaustin. The cytochrome P450 monooxygenase then converts dehydroaustin is into 7-dehydrodehydroaustin. The hydroxylation catalyzed by ausR permits the second O-acetyltransferase ausQ to add an additional acetyl group to the molecule, leading to the formation of acetoxydehydroaustin. Due to genetic rearrangements of the clusters and the subsequent loss of some enzymes, the end product of the Penicillium brasilianum austinoid biosynthesis clusters is acetoxydehydroaustin. AusS is necessary for austinoids production and may play a possible function as a regulator. This Penicillium brasilianum protein is Austinoid biosynthesis clusters protein S.